A 72-amino-acid polypeptide reads, in one-letter code: Heat shock factor-binding protein 1-like protein 1 (72 aa).

Positions 12–62 (DLLQNAAENLLLEVEEHFQALTTTLNLRMEEMGSRIEDLQRNVDDLMTQAG) form a coiled coil.

The protein belongs to the HSBP1 family.

The polypeptide is Heat shock factor-binding protein 1-like protein 1 (Hsbp1l1) (Mus musculus (Mouse)).